The following is a 132-amino-acid chain: Protamine (132 aa).

Disordered stretches follow at residues 17-46 and 96-115; these read GGKKRRRRRSKRRRSRCGRSRRRKSCRGGR and SMLKKRGRRRRRRSCRRRRR. Basic residues-rich tracts occupy residues 18–46 and 98–115; these read GKKRRRRRSKRRRSRCGRSRRRKSCRGGR and LKKRGRRRRRRSCRRRRR.

The protein belongs to the UPF0771 family. As to expression, testis.

The protein resides in the nucleus. It localises to the chromosome. Functionally, protamines substitute for histones in the chromatin of sperm during the haploid phase of spermatogenesis. They compact sperm DNA into a highly condensed, stable and inactive complex. The sequence is that of Protamine from Anthonomus grandis (Mexican cotton boll weevil).